A 167-amino-acid polypeptide reads, in one-letter code: uncharacterized protein (167 aa).

Residues H48, H127, and H131 each coordinate a divalent metal cation.

This sequence belongs to the DinB family.

This is an uncharacterized protein from Bacillus subtilis (strain 168).